Consider the following 864-residue polypeptide: Alpha-glucosidase (864 aa).

An N-terminal signal peptide occupies residues 1 to 22 (MAKVSFIFVAIALITGNVLCQT). Residues N187, N364, and N406 are each glycosylated (N-linked (GlcNAc...) asparagine). The active-site Nucleophile is D430. The active site involves E433. N-linked (GlcNAc...) asparagine glycosylation is found at N466 and N500. The Proton donor role is filled by D567. N-linked (GlcNAc...) asparagine glycans are attached at residues N568 and N734.

It belongs to the glycosyl hydrolase 31 family.

The enzyme catalyses Hydrolysis of terminal, non-reducing (1-&gt;4)-linked alpha-D-glucose residues with release of alpha-D-glucose.. In terms of biological role, hydrolyzes not only malto-oligosaccharides but also soluble starch. This Mucor javanicus protein is Alpha-glucosidase.